The primary structure comprises 492 residues: Protein nucleotidyltransferase YdiU (492 aa).

Residues glycine 91, glycine 93, arginine 94, lysine 114, aspartate 126, glycine 127, arginine 180, and arginine 187 each contribute to the ATP site. The active-site Proton acceptor is aspartate 256. The Mg(2+) site is built by asparagine 257 and aspartate 266. An ATP-binding site is contributed by aspartate 266.

The protein belongs to the SELO family. The cofactor is Mg(2+). Mn(2+) serves as cofactor.

It carries out the reaction L-seryl-[protein] + ATP = 3-O-(5'-adenylyl)-L-seryl-[protein] + diphosphate. The enzyme catalyses L-threonyl-[protein] + ATP = 3-O-(5'-adenylyl)-L-threonyl-[protein] + diphosphate. The catalysed reaction is L-tyrosyl-[protein] + ATP = O-(5'-adenylyl)-L-tyrosyl-[protein] + diphosphate. It catalyses the reaction L-histidyl-[protein] + UTP = N(tele)-(5'-uridylyl)-L-histidyl-[protein] + diphosphate. It carries out the reaction L-seryl-[protein] + UTP = O-(5'-uridylyl)-L-seryl-[protein] + diphosphate. The enzyme catalyses L-tyrosyl-[protein] + UTP = O-(5'-uridylyl)-L-tyrosyl-[protein] + diphosphate. Nucleotidyltransferase involved in the post-translational modification of proteins. It can catalyze the addition of adenosine monophosphate (AMP) or uridine monophosphate (UMP) to a protein, resulting in modifications known as AMPylation and UMPylation. In Synechococcus elongatus (strain ATCC 33912 / PCC 7942 / FACHB-805) (Anacystis nidulans R2), this protein is Protein nucleotidyltransferase YdiU.